The primary structure comprises 871 residues: Patatin-like phospholipase domain-containing protein CNBE2340 (871 aa).

The interval 20–53 (NEDSPLSPRSFSLPPESPQLSTASPIHQRVSRKR) is disordered. Residues 23–33 (SPLSPRSFSLP) are compositionally biased toward low complexity. The chain crosses the membrane as a helical span at residues 68–88 (WPLLFFIFFIIYLEFSAYVIT). The 193-residue stretch at 243–435 (LCLSGGASFG…REDIPLGSLH (193 aa)) folds into the PNPLA domain. The short motif at 274–278 (GTSAG) is the GXSXG element. Residue Ser276 is the Nucleophile of the active site. Asp422 acts as the Proton acceptor in catalysis. Disordered stretches follow at residues 586–707 (ALSH…NFGD), 720–748 (LSSP…QRFR), and 760–871 (VSES…QDGA). 2 stretches are compositionally biased toward polar residues: residues 594 to 606 (NDPA…TNPE) and 687 to 706 (PTHS…SNFG). The segment covering 721-748 (SSPFRSIRSNTSSSSNNVQSPSSSQRFR) has biased composition (low complexity). A compositionally biased stretch (basic and acidic residues) spans 798–820 (VESHSDRSEDEMLHSGANVKEEY).

This sequence belongs to the PLPL family.

It localises to the membrane. Functionally, probable lipid hydrolase. In Cryptococcus neoformans var. neoformans serotype D (strain B-3501A) (Filobasidiella neoformans), this protein is Patatin-like phospholipase domain-containing protein CNBE2340.